We begin with the raw amino-acid sequence, 365 residues long: Short-chain dehydrogenase iccH (365 aa).

L16, R52, and D70 together coordinate NADP(+). An N-linked (GlcNAc...) asparagine glycan is attached at N90. NADP(+)-binding residues include N102, Y221, K225, and S260. The active-site Proton donor is Y221. K225 functions as the Lowers pKa of active site Tyr in the catalytic mechanism. Residues 267-287 (IWVMFLLMKFVLPLLAPLAVW) traverse the membrane as a helical segment. Residues N291 and N324 are each glycosylated (N-linked (GlcNAc...) asparagine).

This sequence belongs to the short-chain dehydrogenases/reductases (SDR) family.

The protein resides in the membrane. It participates in mycotoxin biosynthesis. Functionally, NADH-dependent flavin oxidoreductase; part of the gene cluster that mediates the biosynthesis of ilicicolin H, a 4-hydroxy-2-pyridonealkaloid that has potent and broad antifungal activities by inhibiting the mitochondrial respiration chain. IccA to iccE are sufficient for ilicicolin H biosynthesis and the roles of the remaining enzymes, iccF, iccG and iccH within the pathway have still to be determined. The biosynthesis of ilicicolin H starts with formation of the tetramic acid by the hybrid PKS-NRPS synthetase iccA with the partnering trans-enoyl reductase iccB since iccA lacks a designated enoylreductase (ER) domain. The cytochrome P450 monooxygenase iccC then catalyzes the ring expansion of the tetramate to the acyclic 2-pyridone. The pericyclase iccD further converts the acyclic 2-pyridone into 8-epi-ilicicolin H. Finally, the epimerase iccE converts 8-epi-ilicicolin H into ilicicolin H via epimerizationd. This chain is Short-chain dehydrogenase iccH, found in Talaromyces variabilis (Penicillium variabile).